A 374-amino-acid chain; its full sequence is ATPase ASNA1 homolog (374 aa).

44–51 contacts ATP; the sequence is KGGVGKTT. Asp73 is a catalytic residue. Residues Glu244 and Asn271 each coordinate ATP.

This sequence belongs to the arsA ATPase family. In terms of assembly, homodimer.

The protein localises to the cytoplasm. It is found in the endoplasmic reticulum. Functionally, ATPase required for the post-translational delivery of tail-anchored (TA) proteins to the endoplasmic reticulum. Recognizes and selectively binds the transmembrane domain of TA proteins in the cytosol. This complex then targets to the endoplasmic reticulum by membrane-bound receptors, where the tail-anchored protein is released for insertion. This process is regulated by ATP binding and hydrolysis. ATP binding drives the homodimer towards the closed dimer state, facilitating recognition of newly synthesized TA membrane proteins. ATP hydrolysis is required for insertion. Subsequently, the homodimer reverts towards the open dimer state, lowering its affinity for the membrane-bound receptor, and returning it to the cytosol to initiate a new round of targeting. This chain is ATPase ASNA1 homolog, found in Plasmodium vivax (strain Salvador I).